The following is a 582-amino-acid chain: WD repeat-containing protein JIP5 (582 aa).

WD repeat units lie at residues 27–68 (KYPE…EAQS), 125–168 (RHKG…VLSK), 177–216 (DKNDAITKLVHSTSHPFLLSGTENGDVLVYDSNNMASNQL), 265–310 (DQED…LMDQ), and 373–410 (GPADEVGILDIDYDYRLISAGMDSLKIWSNQEETLNSD). Disordered regions lie at residues 405–496 (ETLN…DTEL) and 531–582 (TKEQ…FDDL). Acidic residues-rich tracts occupy residues 410-438 (DSDDSDSDDSDSDIGSNDSEDSDSDDDDV) and 447-485 (EVNDFSPDSDSETGNDDSDENLEDVADSDSNEDQIENVT). Basic and acidic residues-rich tracts occupy residues 531–540 (TKEQSTKKAD) and 570–582 (QKHEHGIRRFDDL).

Belongs to the WD repeat WDR55 family.

Its subcellular location is the nucleus. It localises to the nucleolus. The chain is WD repeat-containing protein JIP5 (JIP5) from Debaryomyces hansenii (strain ATCC 36239 / CBS 767 / BCRC 21394 / JCM 1990 / NBRC 0083 / IGC 2968) (Yeast).